Reading from the N-terminus, the 457-residue chain is tRNA-2-methylthio-N(6)-dimethylallyladenosine synthase (457 aa).

The MTTase N-terminal domain maps to 3–120; the sequence is KKVYVKTFGC…LPQMIDARRE (118 aa). Positions 12, 49, 83, 157, 161, and 164 each coordinate [4Fe-4S] cluster. One can recognise a Radical SAM core domain in the interval 143-377; that stretch reads RVEGPSAFVS…QATIEENVAR (235 aa). One can recognise a TRAM domain in the interval 380–447; sequence QSMLGKVERI…PHSLRGELVL (68 aa).

Belongs to the methylthiotransferase family. MiaB subfamily. In terms of assembly, monomer. The cofactor is [4Fe-4S] cluster.

The protein localises to the cytoplasm. The enzyme catalyses N(6)-dimethylallyladenosine(37) in tRNA + (sulfur carrier)-SH + AH2 + 2 S-adenosyl-L-methionine = 2-methylsulfanyl-N(6)-dimethylallyladenosine(37) in tRNA + (sulfur carrier)-H + 5'-deoxyadenosine + L-methionine + A + S-adenosyl-L-homocysteine + 2 H(+). Its function is as follows. Catalyzes the methylthiolation of N6-(dimethylallyl)adenosine (i(6)A), leading to the formation of 2-methylthio-N6-(dimethylallyl)adenosine (ms(2)i(6)A) at position 37 in tRNAs that read codons beginning with uridine. The protein is tRNA-2-methylthio-N(6)-dimethylallyladenosine synthase of Burkholderia pseudomallei (strain 1710b).